A 1235-amino-acid chain; its full sequence is Phosphorylase b kinase regulatory subunit alpha, liver isoform (1235 aa).

A disordered region spans residues 636 to 655; that stretch reads FSPDSEPDLGGYLEDSSPQE. Ser695, Ser729, and Ser735 each carry phosphoserine. Residues 807 to 837 are calmodulin-binding; the sequence is LSELYGKAGLNQEWSLIRYISGLLRKKVEVL. Phosphoserine occurs at positions 983, 1015, and 1044. The disordered stretch occupies residues 1033–1060; sequence SIKSVRSSTPSSPTGTSSTDSGGQHLGW. Residues 1039–1055 are compositionally biased toward low complexity; the sequence is SSTPSSPTGTSSTDSGG. Residues 1059–1099 form a calmodulin-binding region; it reads GWGEQQGQWLRRRRLDGAINRVPVGFYQKVWKILQKCHGLS. A lipid anchor (S-farnesyl cysteine) is attached at Cys1232.

Belongs to the phosphorylase b kinase regulatory chain family. Hexadecamer of 4 heterotetramers, each composed of alpha, beta, gamma, and delta subunits. Alpha (PHKA1 or PHKA2) and beta (PHKB) are regulatory subunits, gamma (PHKG1 or PHKG2) is the catalytic subunit, and delta is calmodulin. In terms of processing, although the final Cys may be farnesylated, the terminal tripeptide is probably not removed, and the C-terminus is not methylated.

It is found in the cell membrane. It functions in the pathway glycan biosynthesis; glycogen metabolism. By phosphorylation of various serine residues and by calcium. Phosphorylase b kinase catalyzes the phosphorylation of serine in certain substrates, including troponin I. The alpha chain may bind calmodulin. The protein is Phosphorylase b kinase regulatory subunit alpha, liver isoform (Phka2) of Mus musculus (Mouse).